The chain runs to 418 residues: MEDYHISRGKHFYTIGLSYKKADAEIRGHFSLTEESKQRLLEQAKEEGIDGILVTSTCNRTEIYGFAQHPFQLIKLLCEHTHGTVEEFEKVAYVYKNKQAITHIFKVGTGLDSQILGDFEIISQLKIAFVRSKKLGLVNAFLERLVNAVIQASKRIKNETEISTGATSVSFASVQYILKHIDKVSEKNILLFGTGKIGRNTCENLVKHTRNNHITLINRTKDKAERIAGKFNLIVKDYADLQAEIRNSDILIVATGAQNPTISKELIYPKKELLILDLSIPKNVSDDVHELENVKLIHLDHLSQMTDETLEKRKQFIPQAKEIITEVESEFNRWLETRKFAPTIKALKKKLKTMKDDELDFQRKKISDFNDEQAEIVSNRIIQKIMKHFANHLKGDAETTDESLELIQKVFQLEEVNK.

Substrate contacts are provided by residues threonine 57–arginine 60, serine 113, aspartate 118–glutamate 120, and glutamine 124. The Nucleophile role is filled by cysteine 58. Residue glycine 193–glycine 198 participates in NADP(+) binding.

The protein belongs to the glutamyl-tRNA reductase family. Homodimer.

It catalyses the reaction (S)-4-amino-5-oxopentanoate + tRNA(Glu) + NADP(+) = L-glutamyl-tRNA(Glu) + NADPH + H(+). The protein operates within porphyrin-containing compound metabolism; protoporphyrin-IX biosynthesis; 5-aminolevulinate from L-glutamyl-tRNA(Glu): step 1/2. In terms of biological role, catalyzes the NADPH-dependent reduction of glutamyl-tRNA(Glu) to glutamate 1-semialdehyde (GSA). The polypeptide is Glutamyl-tRNA reductase (Christiangramia forsetii (strain DSM 17595 / CGMCC 1.15422 / KT0803) (Gramella forsetii)).